Consider the following 385-residue polypeptide: Succinate--CoA ligase [ADP-forming] subunit beta (385 aa).

Positions 9 to 240 constitute an ATP-grasp domain; it reads KEIFAKYGIP…ETQLPQLEVE (232 aa). ATP-binding positions include lysine 46, 53-55, glutamate 98, threonine 101, and glutamate 106; that span reads GRG. Residues asparagine 195 and aspartate 209 each coordinate Mg(2+). Substrate is bound by residues asparagine 260 and 317-319; that span reads GIL.

It belongs to the succinate/malate CoA ligase beta subunit family. As to quaternary structure, heterotetramer of two alpha and two beta subunits. Mg(2+) is required as a cofactor.

The enzyme catalyses succinate + ATP + CoA = succinyl-CoA + ADP + phosphate. It carries out the reaction GTP + succinate + CoA = succinyl-CoA + GDP + phosphate. The protein operates within carbohydrate metabolism; tricarboxylic acid cycle; succinate from succinyl-CoA (ligase route): step 1/1. In terms of biological role, succinyl-CoA synthetase functions in the citric acid cycle (TCA), coupling the hydrolysis of succinyl-CoA to the synthesis of either ATP or GTP and thus represents the only step of substrate-level phosphorylation in the TCA. The beta subunit provides nucleotide specificity of the enzyme and binds the substrate succinate, while the binding sites for coenzyme A and phosphate are found in the alpha subunit. This chain is Succinate--CoA ligase [ADP-forming] subunit beta, found in Aquifex aeolicus (strain VF5).